The primary structure comprises 219 residues: Elongation factor Ts (219 aa).

Positions 82 to 85 are involved in Mg(2+) ion dislocation from EF-Tu; sequence TDFV.

Belongs to the EF-Ts family.

It is found in the cytoplasm. Its function is as follows. Associates with the EF-Tu.GDP complex and induces the exchange of GDP to GTP. It remains bound to the aminoacyl-tRNA.EF-Tu.GTP complex up to the GTP hydrolysis stage on the ribosome. The chain is Elongation factor Ts from Anaeromyxobacter sp. (strain K).